The primary structure comprises 153 residues: IWYLFRDNLLPRNTKFIGYARTKQTLAEVKEKCKKYIKVRTGEEDKLEEFWAANDYLSGSYDKRVDYEFLNQVISKYEKGPIANRIFYLAVPPTVFEDATLNIRNACTSIKGFTRVIIEKPFGRDDKSSDILSKDLAGLFKEEQIYRIDHYLG.

2 residues coordinate NADP(+): arginine 21 and lysine 120. Lysine 120 serves as a coordination point for D-glucose 6-phosphate.

It belongs to the glucose-6-phosphate dehydrogenase family.

The protein resides in the cytoplasm. Its subcellular location is the cytosol. It catalyses the reaction D-glucose 6-phosphate + NADP(+) = 6-phospho-D-glucono-1,5-lactone + NADPH + H(+). It participates in carbohydrate degradation; pentose phosphate pathway; D-ribulose 5-phosphate from D-glucose 6-phosphate (oxidative stage): step 1/3. Its function is as follows. Cytosolic glucose-6-phosphate dehydrogenase that catalyzes the first and rate-limiting step of the oxidative branch within the pentose phosphate pathway/shunt, an alternative route to glycolysis for the dissimilation of carbohydrates and a major source of reducing power and metabolic intermediates for fatty acid and nucleic acid biosynthetic processes. The protein is Glucose-6-phosphate 1-dehydrogenase (ZW) of Hyalophora cecropia (Cecropia moth).